Consider the following 502-residue polypeptide: Histidine--tRNA ligase (502 aa).

This sequence belongs to the class-II aminoacyl-tRNA synthetase family. Homodimer.

Its subcellular location is the cytoplasm. The enzyme catalyses tRNA(His) + L-histidine + ATP = L-histidyl-tRNA(His) + AMP + diphosphate + H(+). In Brucella suis (strain ATCC 23445 / NCTC 10510), this protein is Histidine--tRNA ligase.